Consider the following 233-residue polypeptide: Probable O-methyltransferase Rv1703c (233 aa).

S-adenosyl-L-methionine contacts are provided by residues V55, E77, 79 to 80 (GT), and E102. An a divalent metal cation-binding site is contributed by D157. Position 159 (D159) interacts with S-adenosyl-L-methionine. D185 and N186 together coordinate a divalent metal cation.

The protein belongs to the class I-like SAM-binding methyltransferase superfamily. Cation-dependent O-methyltransferase family.

Its function is as follows. Specifically methylates an O atom of its substrate. The chain is Probable O-methyltransferase Rv1703c from Mycobacterium tuberculosis (strain ATCC 25618 / H37Rv).